A 383-amino-acid polypeptide reads, in one-letter code: Protein delta homolog 2 (383 aa).

The first 26 residues, 1–26 (MPSGCRCLHLVCLLCILGAPGQPVRA), serve as a signal peptide directing secretion. 4 consecutive EGF-like domains span residues 27–58 (DDCS…LHCE), 62–89 (RMPG…KFCD), 91–129 (DEHI…RDCE), and 131–172 (KAGP…ARCE). Topologically, residues 27–306 (DDCSSHCDLA…RQEAGLGEPS (280 aa)) are extracellular. 17 cysteine pairs are disulfide-bonded: Cys29-Cys40, Cys33-Cys46, Cys48-Cys57, Cys66-Cys71, Cys79-Cys88, Cys95-Cys107, Cys101-Cys117, Cys119-Cys128, Cys135-Cys148, Cys142-Cys160, Cys162-Cys171, Cys178-Cys189, Cys183-Cys198, Cys200-Cys209, Cys216-Cys227, Cys221-Cys236, and Cys238-Cys247. A glycan (N-linked (GlcNAc...) asparagine) is linked at Asn157. The EGF-like 5; calcium-binding domain occupies 174 to 210 (NVDDCLMRPCANGATCLDGINRFSCLCPEGFAGRFCT). Positions 212-248 (NLDDCASRPCQRGARCRDRVHDFDCLCPSGYGGKTCE) constitute an EGF-like 6; calcium-binding domain. A helical transmembrane segment spans residues 307-327 (LVALVVFGALTAALVLATVLL). Residues 328-383 (TLRAWRRGVCPPGPCCYPAPHYAPACQDQECQVSMLPAGLPLPRDLPPEPGKTTAL) are Cytoplasmic-facing.

The protein resides in the membrane. Regulates adipogenesis. This is Protein delta homolog 2 (DLK2) from Homo sapiens (Human).